Consider the following 412-residue polypeptide: Sexual development regulator umv3 (412 aa).

The segment at methionine 1–histidine 197 is disordered. Polar residues-rich tracts occupy residues arginine 73 to serine 93 and arginine 149 to threonine 170. The span at glutamate 171–arginine 181 shows a compositional bias: basic and acidic residues. A Velvet domain is found at proline 195 to arginine 388.

This sequence belongs to the velvet family. VelC subfamily.

Its subcellular location is the nucleus. In terms of biological role, velvet-domain-containing protein not required for disease or sexual development on seedlings. This Mycosarcoma maydis (Corn smut fungus) protein is Sexual development regulator umv3.